The chain runs to 699 residues: Sarcoplasmic reticulum histidine-rich calcium-binding protein (699 aa).

The N-terminal stretch at Met-1–Gln-28 is a signal peptide. The interval Ser-50–Val-95 is disordered. Over residues Ala-55 to Glu-89 the composition is skewed to basic and acidic residues. Thr-76 bears the Phosphothreonine; by FAM20C mark. A run of 10 repeats spans residues His-106 to Glu-121, His-134 to Ser-154, His-155 to Ile-177, His-180 to Ala-213, His-214 to Ser-237, His-238 to Ala-270, His-271 to Ser-294, His-295 to Ala-318, His-319 to Asp-342, and His-343 to Gly-365. The tract at residues His-106 to Asp-342 is 6 X approximate tandem repeats. A 4 X tandem repeats, acidic region spans residues His-106–Gly-365. Phosphoserine; by FAM20C occurs at positions 119 and 145. The tract at residues His-127–Glu-617 is disordered. 2 stretches are compositionally biased toward basic residues: residues His-148–His-158 and His-173–Arg-183. A compositionally biased stretch (acidic residues) spans Gly-187–Ser-206. Over residues His-231–Gln-241 the composition is skewed to basic residues. The segment covering Glu-244–Ser-263 has biased composition (acidic residues). The span at His-288 to Arg-298 shows a compositional bias: basic residues. The span at Glu-302–Ser-311 shows a compositional bias: acidic residues. Residues His-324–Glu-335 are compositionally biased toward basic and acidic residues. Residue Ser-333 is modified to Phosphoserine. A compositionally biased stretch (basic residues) spans His-336 to Gly-347. Phosphoserine; by FAM20C is present on residues Ser-358 and Ser-431. Basic and acidic residues-rich tracts occupy residues Ser-444–His-463 and Val-470–Asp-481. At Ser-494 the chain carries Phosphoserine; by FAM20C. The segment covering Gln-504–Asp-515 has biased composition (basic and acidic residues). Composition is skewed to acidic residues over residues Gln-532–Arg-551 and Ser-567–Glu-581. The residue at position 567 (Ser-567) is a Phosphoserine; by FAM20C. The interval Cys-627 to Cys-673 is metal-binding.

It belongs to the HRC family.

It is found in the sarcoplasmic reticulum lumen. Functionally, may play a role in the regulation of calcium sequestration or release in the SR of skeletal and cardiac muscle. This chain is Sarcoplasmic reticulum histidine-rich calcium-binding protein (HRC), found in Homo sapiens (Human).